Here is an 873-residue protein sequence, read N- to C-terminus: Bifunctional levopimaradiene synthase, chloroplastic (873 aa).

Residues 1 to 59 constitute a chloroplast transit peptide; the sequence is MAGVLFANLPCSLQLSPKVPFRQSTNILIPFHKRSSFGFNAQHCVRSHLRLRWNCVGIH. K271 serves as a coordination point for substrate. D405 and D407 together coordinate Mg(2+). Residues 405–408 carry the DXDD motif motif; sequence DVDD. K492 provides a ligand contact to substrate. Mg(2+) contacts are provided by D624, D628, N769, T773, and E777. The short motif at 624–628 is the DDXXD motif element; that stretch reads DDLYD.

The protein belongs to the terpene synthase family. Tpsd subfamily. It depends on Mg(2+) as a cofactor. In terms of tissue distribution, expressed in roots.

It is found in the plastid. The protein resides in the chloroplast. It catalyses the reaction (2E,6E,10E)-geranylgeranyl diphosphate = (+)-copalyl diphosphate. The enzyme catalyses (+)-copalyl diphosphate = abieta-8(14),12-diene + diphosphate. Its pathway is terpene metabolism; ginkgolide biosynthesis. Functionally, catalyzes the initial cyclization step in the biosynthesis of ginkgolides, a structurally unique family of diterpenoids that are highly specific platelet-activating-factor receptor antagonists. Bifunctional enzyme that catalyzes two sequential cyclizations of geranylgeranyl diphosphate (GGPP) to levopimaradiene. This Ginkgo biloba (Ginkgo) protein is Bifunctional levopimaradiene synthase, chloroplastic (LPS).